The following is a 360-amino-acid chain: POU domain, class 5, transcription factor 1 (360 aa).

Disordered regions lie at residues 1-51 and 88-114; these read MAGH…GPGV and GGLE…SPEP. The short motif at 4–12 is the 9aaTAD element; that stretch reads HLTSDFAFS. S111 carries the post-translational modification Phosphoserine; by MAPK. K123 is covalently cross-linked (Glycyl lysine isopeptide (Lys-Gly) (interchain with G-Cter in SUMO)). Residues 138–212 form the POU-specific domain; it reads DIKALQKELE…LLQKWVEEAD (75 aa). Residues R157 and Q164 each coordinate DNA. 2 DNA-binding regions span residues 180 to 186 and 193 to 196; these read SQTTICR and SFKN. The segment at residues 230–289 is a DNA-binding region (homeobox); it reads RKRKRTSIENRVRGNLENLFLQCPKPTLQQISHIAQQLGLEKDVVRVWFCNRRQKGKRSS. T235 is modified (phosphothreonine). Residues S236, S289, S290, and S355 each carry the phosphoserine modification.

Belongs to the POU transcription factor family. Class-5 subfamily. In terms of assembly, interacts with PKM. Interacts with WWP2. Interacts with UBE2I and ZSCAN10. Interacts with PCGF1. Interacts with ESRRB; recruits ESRRB near the POU5F1-SOX2 element in the NANOG proximal promoter; the interaction is DNA independent. Interacts with ZNF322. Interacts with MAPK8 and MAPK9; the interaction allows MAPK8 and MAPK9 to phosphorylate POU5F1 on Ser-355. Interacts (when phosphorylated on Ser-355) with FBXW8. Interacts with FBXW4. Interacts with SOX2 and SOX15; binds synergistically with either SOX2 or SOX15 to DNA. Interacts with DDX56. Sumoylation enhances the protein stability, DNA binding and transactivation activity. Sumoylation is required for enhanced YES1 expression. In terms of processing, ubiquitinated; undergoes 'Lys-63'-linked polyubiquitination by WWP2 leading to proteasomal degradation. Post-translationally, ERK1/2-mediated phosphorylation at Ser-111 promotes nuclear exclusion and proteasomal degradation. Phosphorylation at Thr-235 and Ser-236 decrease DNA-binding and alters ability to activate transcription.

It localises to the cytoplasm. The protein resides in the nucleus. Functionally, transcription factor that binds to the octamer motif (5'-ATTTGCAT-3'). Forms a trimeric complex with SOX2 or SOX15 on DNA and controls the expression of a number of genes involved in embryonic development such as YES1, FGF4, UTF1 and ZFP206. Critical for early embryogenesis and for embryonic stem cell pluripotency. The chain is POU domain, class 5, transcription factor 1 (POU5F1) from Pan troglodytes (Chimpanzee).